A 970-amino-acid chain; its full sequence is Serine/threonine-protein kinase PLK4 (970 aa).

One can recognise a Protein kinase domain in the interval 12–265 (FKVGNLLGKG…LSSVLDHPFM (254 aa)). ATP-binding positions include 18–26 (LGKGSFAGV) and K41. An N6-acetyllysine mark is found at K45 and K46. Residue D136 is the Proton acceptor of the active site. Residues 324 to 373 (VFPKNKSSSDFSSSGDGNSFYTQWGNQETSNSGRGRVIQDAEERPHSRYL) form a disordered region. Residues 327-343 (KNKSSSDFSSSGDGNSF) show a composition bias toward low complexity. The segment covering 344–356 (YTQWGNQETSNSG) has biased composition (polar residues). Basic and acidic residues predominate over residues 360 to 369 (VIQDAEERPH). Position 401 is a phosphoserine (S401). Residues 498–540 (ISPTRDFQGHPDLQKDTSKNAWTDTKVKKNSDASDNAHSVKQP) are disordered. A compositionally biased stretch (basic and acidic residues) spans 504–515 (FQGHPDLQKDTS). The segment covering 530 to 540 (ASDNAHSVKQP) has biased composition (polar residues). Residues 586 to 699 (TLRSITSPLV…SRFVQLVRSK (114 aa)) enclose the Cryptic POLO box 1 (CPB1) domain. S665 carries the phosphoserine modification. In terms of domain architecture, Cryptic POLO box 2 (CPB2) spans 700–813 (SPKITYFTRY…GRKPGSTSSP (114 aa)). Residues 808 to 829 (GSTSSPKALSPPPSVDSNYPTR) form a disordered region. Residue S817 is modified to Phosphoserine. Residues 886 to 964 (QLLKSVFVKN…LSSILLMFSN (79 aa)) form the POLO box domain.

This sequence belongs to the protein kinase superfamily. Ser/Thr protein kinase family. CDC5/Polo subfamily. Homodimer. Interacts with CEP152 (via N-terminus). Interacts with CEP78; this interaction may be important for proper PLK4 localization to the centriole and PLK4-induced overduplication of centrioles. Interacts with CEP131. Interacts simultaneously with TENT5C and CEP192. Interacts with TENT5C; this interaction leads to the TENT5C recruitment in the centrosome. Interacts with CEP85; this interaction may be important in cell migration and centriole assembly. Ubiquitinated; leading to its degradation by the proteasome. Deubiquitinated by USP54; leading to PLK4 stabilization. Post-translationally, tyrosine-phosphorylated by TEC. In terms of processing, acetylation by KAT2A and KAT2B impairs kinase activity by shifting the kinase to an inactive conformation.

It localises to the cytoplasm. The protein localises to the cytoskeleton. Its subcellular location is the microtubule organizing center. The protein resides in the centrosome. It is found in the centriole. It localises to the nucleus. The protein localises to the nucleolus. Its subcellular location is the cleavage furrow. It carries out the reaction L-seryl-[protein] + ATP = O-phospho-L-seryl-[protein] + ADP + H(+). It catalyses the reaction L-threonyl-[protein] + ATP = O-phospho-L-threonyl-[protein] + ADP + H(+). Its function is as follows. Serine/threonine-protein kinase that plays a central role in centriole duplication. Able to trigger procentriole formation on the surface of the parental centriole cylinder, leading to the recruitment of centriole biogenesis proteins such as SASS6, CPAP, CCP110, CEP135 and gamma-tubulin. When overexpressed, it is able to induce centrosome amplification through the simultaneous generation of multiple procentrioles adjoining each parental centriole during S phase. Phosphorylates 'Ser-151' of FBXW5 during the G1/S transition, leading to inhibit FBXW5 ability to ubiquitinate SASS6. Its central role in centriole replication suggests a possible role in tumorigenesis, centrosome aberrations being frequently observed in tumors. Also involved in deuterosome-mediated centriole amplification in multiciliated that can generate more than 100 centrioles. Also involved in trophoblast differentiation by phosphorylating HAND1, leading to disrupt the interaction between HAND1 and MDFIC and activate HAND1. Phosphorylates CDC25C and CHEK2. Required for the recruitment of STIL to the centriole and for STIL-mediated centriole amplification. Phosphorylates CEP131 and PCM1 which is essential for proper organization and integrity of centriolar satellites. This Pongo abelii (Sumatran orangutan) protein is Serine/threonine-protein kinase PLK4.